The sequence spans 88 residues: Arminin 7965 (88 aa).

The first 18 residues, 1 to 18 (MKTVFAILFLTFIAFTYA), serve as a signal peptide directing secretion. Residues 19–57 (KSYEDVKEEIKNEVEREIFEDLEEESDVLDSNVRELNDA) constitute a propeptide that is removed on maturation. Position 85 is an alanine amide (Ala-85).

It belongs to the arminin family. In terms of tissue distribution, expressed in entodermal epithelium along the body column.

It localises to the secreted. The protein localises to the target cell membrane. Antimicrobial peptide with a broad-spectrum antimicrobial activity. Keeps its antibacterial activity under a wide range of salt concentrations that mimic physiological conditions of human blood, which is surprising, since Hydra is an obligate freshwater animal with nearly no salt tolerance. Does not affect red blood cells. The polypeptide is Arminin 7965 (Hydra vulgaris (Hydra)).